The sequence spans 363 residues: Molybdenum import ATP-binding protein ModC (363 aa).

Residues 1-232 (MLDLDLRRRQ…PGLRPLTGRY (232 aa)) enclose the ABC transporter domain. Residue 30-37 (GRSGSGKT) participates in ATP binding. One can recognise a Mop domain in the interval 292–358 (RVSIRNVLPA…IKALTIARGD (67 aa)).

It belongs to the ABC transporter superfamily. Molybdate importer (TC 3.A.1.8) family. In terms of assembly, the complex is composed of two ATP-binding proteins (ModC), two transmembrane proteins (ModB) and a solute-binding protein (ModA).

Its subcellular location is the cell inner membrane. It carries out the reaction molybdate(out) + ATP + H2O = molybdate(in) + ADP + phosphate + H(+). In terms of biological role, part of the ABC transporter complex ModABC involved in molybdenum import. Responsible for energy coupling to the transport system. The protein is Molybdenum import ATP-binding protein ModC of Paramagnetospirillum magneticum (strain ATCC 700264 / AMB-1) (Magnetospirillum magneticum).